Consider the following 311-residue polypeptide: Malate dehydrogenase (311 aa).

NAD(+) contacts are provided by residues 7-13 and D34; that span reads GAAGGIG. Residues R81 and R87 each coordinate substrate. NAD(+) contacts are provided by residues N94 and 117-119; that span reads ITN. N119 and R153 together coordinate substrate. The active-site Proton acceptor is H177. NAD(+) is bound at residue M227.

It belongs to the LDH/MDH superfamily. MDH type 1 family. In terms of assembly, homodimer.

It carries out the reaction (S)-malate + NAD(+) = oxaloacetate + NADH + H(+). Functionally, catalyzes the reversible oxidation of malate to oxaloacetate. The protein is Malate dehydrogenase of Shewanella pealeana (strain ATCC 700345 / ANG-SQ1).